Here is a 369-residue protein sequence, read N- to C-terminus: 4-hydroxy-3-methylbut-2-en-1-yl diphosphate synthase (flavodoxin) (369 aa).

The [4Fe-4S] cluster site is built by Cys-270, Cys-273, Cys-305, and Glu-312.

Belongs to the IspG family. Requires [4Fe-4S] cluster as cofactor.

It catalyses the reaction (2E)-4-hydroxy-3-methylbut-2-enyl diphosphate + oxidized [flavodoxin] + H2O + 2 H(+) = 2-C-methyl-D-erythritol 2,4-cyclic diphosphate + reduced [flavodoxin]. It participates in isoprenoid biosynthesis; isopentenyl diphosphate biosynthesis via DXP pathway; isopentenyl diphosphate from 1-deoxy-D-xylulose 5-phosphate: step 5/6. Its function is as follows. Converts 2C-methyl-D-erythritol 2,4-cyclodiphosphate (ME-2,4cPP) into 1-hydroxy-2-methyl-2-(E)-butenyl 4-diphosphate. The polypeptide is 4-hydroxy-3-methylbut-2-en-1-yl diphosphate synthase (flavodoxin) (Pseudomonas putida (strain W619)).